The following is a 361-amino-acid chain: Peptide chain release factor 1 (361 aa).

Gln-236 bears the N5-methylglutamine mark.

Belongs to the prokaryotic/mitochondrial release factor family. In terms of processing, methylated by PrmC. Methylation increases the termination efficiency of RF1.

The protein resides in the cytoplasm. Peptide chain release factor 1 directs the termination of translation in response to the peptide chain termination codons UAG and UAA. The chain is Peptide chain release factor 1 from Lactobacillus delbrueckii subsp. bulgaricus (strain ATCC 11842 / DSM 20081 / BCRC 10696 / JCM 1002 / NBRC 13953 / NCIMB 11778 / NCTC 12712 / WDCM 00102 / Lb 14).